The sequence spans 298 residues: GPN-loop GTPase QQT1 (298 aa).

12–17 (GSGKTT) is a GTP binding site. A Gly-Pro-Asn (GPN)-loop; involved in dimer interface motif is present at residues 69–71 (GPN). GTP is bound at residue 173–176 (SKID).

This sequence belongs to the GPN-loop GTPase family. Heterodimer with QQT2. In terms of tissue distribution, expressed in vascular tissues, root tips, apical and root meristematic regions, and floral primordia.

It localises to the cytoplasm. The protein resides in the nucleus. The protein localises to the cytoskeleton. Its subcellular location is the spindle. It is found in the phragmoplast. In terms of biological role, small GTPase that is essential for the correct formation of the tangential divisions in early embryos. Associates with microtubule during mitosis and may function in the positioning of the division plane. May participate in the patterning of the early embryo at the octant-dermatogen transition. Is crucial for normal development of the plant. The sequence is that of GPN-loop GTPase QQT1 from Arabidopsis thaliana (Mouse-ear cress).